Reading from the N-terminus, the 699-residue chain is Polyribonucleotide nucleotidyltransferase (699 aa).

Positions 484 and 490 each coordinate Mg(2+). The region spanning 551–610 (PRITTIQVKPDQVRTVIGPGGKNVRGIIEATGCAIDIEDDGRINIASADGDACKAAIKMI) is the KH domain. An S1 motif domain is found at 620-688 (GKLYMATVKK…RQGKIKLSRK (69 aa)).

Belongs to the polyribonucleotide nucleotidyltransferase family. The cofactor is Mg(2+).

It is found in the cytoplasm. It catalyses the reaction RNA(n+1) + phosphate = RNA(n) + a ribonucleoside 5'-diphosphate. Its function is as follows. Involved in mRNA degradation. Catalyzes the phosphorolysis of single-stranded polyribonucleotides processively in the 3'- to 5'-direction. The sequence is that of Polyribonucleotide nucleotidyltransferase from Syntrophotalea carbinolica (strain DSM 2380 / NBRC 103641 / GraBd1) (Pelobacter carbinolicus).